The sequence spans 221 residues: UPF0758 protein PC1_4100 (221 aa).

The 123-residue stretch at 99 to 221 (AMLNPQATGQ…YVSFAERGWI (123 aa)) folds into the MPN domain. The Zn(2+) site is built by His170, His172, and Asp183. The JAMM motif motif lies at 170 to 183 (HNHPSGKAEPSQAD).

The protein belongs to the UPF0758 family. YicR subfamily.

This Pectobacterium carotovorum subsp. carotovorum (strain PC1) protein is UPF0758 protein PC1_4100.